The following is a 785-amino-acid chain: Leucyl aminopeptidase (785 aa).

Substrate is bound by residues Glu106 and 238–242; that span reads GAMEN. His273 contacts Zn(2+). Catalysis depends on Glu274, which acts as the Proton acceptor. Positions 277 and 296 each coordinate Zn(2+).

The protein belongs to the peptidase M1 family. As to quaternary structure, co-immunoprecipitates with the 60 kDa chaperonin. The cofactor is Zn(2+). Can be phosphorylated by cell extracts.

It localises to the cytoplasm. It catalyses the reaction Release of an N-terminal amino acid, Xaa-|-Yaa-, in which Xaa is preferably Leu, but may be other amino acids including Pro although not Arg or Lys, and Yaa may be Pro. Amino acid amides and methyl esters are also readily hydrolyzed, but rates on arylamides are exceedingly low.. In terms of biological role, preferentially acts as a leucyl-aminopeptidase, although it also has activity against other substrates. In Saccharolobus solfataricus (strain ATCC 35092 / DSM 1617 / JCM 11322 / P2) (Sulfolobus solfataricus), this protein is Leucyl aminopeptidase (ape2).